Consider the following 158-residue polypeptide: HVA22-like protein f (158 aa).

Helical transmembrane passes span 2–22, 41–61, and 63–83; these read GFII…VMLL, QQWL…LSVW, and VLAW…WLVL.

Belongs to the DP1 family.

It is found in the membrane. This is HVA22-like protein f (HVA22F) from Arabidopsis thaliana (Mouse-ear cress).